The following is a 331-amino-acid chain: D-lactate/D-glycerate dehydrogenase (331 aa).

NAD(+)-binding positions include 154 to 155 (RI), aspartate 174, 205 to 206 (VP), asparagine 211, 232 to 234 (FAR), and aspartate 258. Residue arginine 234 is part of the active site. Residue glutamate 263 is part of the active site. Residue histidine 295 is the Proton donor of the active site.

The protein belongs to the D-isomer specific 2-hydroxyacid dehydrogenase family. In terms of assembly, homodimer.

It catalyses the reaction (R)-lactate + NAD(+) = pyruvate + NADH + H(+). The catalysed reaction is (R)-glycerate + NAD(+) = 3-hydroxypyruvate + NADH + H(+). Its function is as follows. Has both D-lactate and D-glycerate dehydrogenase activities. Equally active on pyruvate and hydroxypyruvate. This Pediococcus acidilactici protein is D-lactate/D-glycerate dehydrogenase.